The sequence spans 501 residues: V-type proton ATPase subunit B 2 (501 aa).

Arg-392 contributes to the ATP binding site.

It belongs to the ATPase alpha/beta chains family. In terms of assembly, V-ATPase is a heteromultimeric enzyme made up of two complexes: the ATP-hydrolytic V1 complex and the proton translocation V0 complex. The V1 complex consists of three catalytic AB heterodimers that form a heterohexamer, three peripheral stalks each consisting of EG heterodimers, one central rotor including subunits D and F, and the regulatory subunits C and H. The proton translocation complex V0 consists of the proton transport subunit a, a ring of proteolipid subunits c9c'', rotary subunit d, subunits e and f, and the accessory subunits vah-19/Ac45 and vah-20/PRR. As to expression, predominantly expressed in male and hermaphrodite testis (at protein level).

It is found in the cytoplasm. Non-catalytic subunit of the V1 complex of vacuolar(H+)-ATPase (V-ATPase), a multisubunit enzyme composed of a peripheral complex (V1) that hydrolyzes ATP and a membrane integral complex (V0) that translocates protons. V-ATPase is responsible for acidifying and maintaining the pH of intracellular compartments and in some cell types, is targeted to the plasma membrane, where it is responsible for acidifying the extracellular environment. In neurons, required for necrotic cell death probably by promoting intracellular acidification. Required for spermatogenesis where it regulates the fibrous body-membranous organelle (FBMO) morphology in spermatocytes and the acidification of FBMO-derived secretory membranous organelles (MOs) as spermatids mature. The protein is V-type proton ATPase subunit B 2 of Caenorhabditis elegans.